Reading from the N-terminus, the 305-residue chain is MNNLLSIEQLTGDEIRDLLALGHRLKAERGHHERLPLKGQTWALIFSKSSTRTRVSFEVGISELGGRPMFLSVHDIQLGRGEPIKDTARVLGRMIHGAAIRTYGQQEVEEFASFSGIPTINALTDEEHPCQILADLLTIEEIYGPGSWKDMKIAFVGDGDNNMSRSWMWAAKRLGFTLAIGAPTNYLPLEDFRRHLDCENVIFTTDPVEAVKGASVINTDVWLSMGQESEGLSKEKHFYPYQVNRELLEHAASGHSVFHCLPAYRGKEITEDVLEHFAPVIFREAENRVHAQKAVLATLADARRG.

Residues 50–53 (STRT), glutamine 77, arginine 101, and 128–131 (HPCQ) each bind carbamoyl phosphate. L-ornithine is bound by residues asparagine 162, aspartate 220, and 224–225 (SM). Carbamoyl phosphate-binding positions include 260 to 261 (CL) and arginine 288.

The protein belongs to the aspartate/ornithine carbamoyltransferase superfamily. OTCase family.

It localises to the cytoplasm. The catalysed reaction is carbamoyl phosphate + L-ornithine = L-citrulline + phosphate + H(+). Its pathway is amino-acid degradation; L-arginine degradation via ADI pathway; carbamoyl phosphate from L-arginine: step 2/2. In terms of biological role, reversibly catalyzes the transfer of the carbamoyl group from carbamoyl phosphate (CP) to the N(epsilon) atom of ornithine (ORN) to produce L-citrulline. The protein is Ornithine carbamoyltransferase of Akkermansia muciniphila (strain ATCC BAA-835 / DSM 22959 / JCM 33894 / BCRC 81048 / CCUG 64013 / CIP 107961 / Muc).